We begin with the raw amino-acid sequence, 303 residues long: Putative monooxygenase p33MONOX (303 aa).

Disordered stretches follow at residues 1-20 (MASRQPEVPALAPSGPLGKM), 37-56 (LEDPAPMTPPPSDMGSIPWK), 66-96 (HLDKTEEGAASVSSLAVTPSPATDSSDKAPV), 156-233 (KLQS…LQKS), and 260-283 (RVGEDPATFKPPKMDVPMVEGKKQ). Thr44 is modified (phosphothreonine). A Flavin-containing monooxygenase motif motif is present at residues 67 to 77 (LDKTEEGAASV). The span at 76–89 (SVSSLAVTPSPATD) shows a compositional bias: polar residues. Residues 170 to 183 (ASAQSTPSSTPHAS) show a composition bias toward low complexity. Thr175 bears the Phosphothreonine mark. Ser183 carries the phosphoserine modification.

The protein belongs to the P33MONOX family. Interacts with NELFB, NOL12 and PRNP. As to expression, expressed in neuronal pyramidal cells of the hippocampus and in the neurons of the cortex.

The protein resides in the cytoplasm. Its function is as follows. Potential NADPH-dependent oxidoreductase. May be involved in the regulation of neuronal survival, differentiation and axonal outgrowth. The polypeptide is Putative monooxygenase p33MONOX (P33monox) (Mus musculus (Mouse)).